We begin with the raw amino-acid sequence, 325 residues long: Phosphate import ATP-binding protein PstB (325 aa).

The ABC transporter domain maps to 79 to 320 (IDNYNLWYSN…PNNEKTKDYI (242 aa)). 111-118 (GPSGCGKS) contacts ATP.

The protein belongs to the ABC transporter superfamily. Phosphate importer (TC 3.A.1.7) family. As to quaternary structure, the complex is composed of two ATP-binding proteins (PstB), two transmembrane proteins (PstC and PstA) and a solute-binding protein (PstS).

The protein localises to the cell membrane. It catalyses the reaction phosphate(out) + ATP + H2O = ADP + 2 phosphate(in) + H(+). In terms of biological role, part of the ABC transporter complex PstSACB involved in phosphate import. Responsible for energy coupling to the transport system. This chain is Phosphate import ATP-binding protein PstB, found in Mycoplasmoides gallisepticum (strain R(low / passage 15 / clone 2)) (Mycoplasma gallisepticum).